The sequence spans 836 residues: Protein O-mannosyl-transferase TMTC2 (836 aa).

Residues 1–21 (MIAELVSSALGLALYLNTLSA) form a helical membrane-spanning segment. Over 22–84 (DFCYDDSRAI…LNHAIGGLNP (63 aa)) the chain is Extracellular. A helical membrane pass occupies residues 85–105 (WSYHLVNVLLHAAVTGLFTSF). The Cytoplasmic segment spans residues 106–107 (SK). A helical membrane pass occupies residues 108-128 (ILLGDGYWTFMAGLMFASHPI). At 129–132 (HTEA) the chain is on the extracellular side. A helical membrane pass occupies residues 133 to 153 (VAGIVGRADVGASLFFLLSLL). The Cytoplasmic segment spans residues 154-162 (CYIKHCSTR). Transmembrane regions (helical) follow at residues 163–184 (GYSARTWGWFLGSGLCAGCSML) and 185–204 (WKEQGVTVLAVSAVYDVFVF). Topologically, residues 205-220 (HRLKIKQILPTIYKRK) are cytoplasmic. A helical transmembrane segment spans residues 221–241 (NLSLFLSISLLIFWGSSLLGA). Residues 242 to 312 (RLYWMGNKPP…KTVCDWRNLH (71 aa)) lie on the Extracellular side of the membrane. A helical transmembrane segment spans residues 313–333 (TVAFYTGLLLLAYYGLKSPSV). The Cytoplasmic portion of the chain corresponds to 334-399 (DRECNGKTVT…TENIVVLSLS (66 aa)). The chain crosses the membrane as a helical span at residues 400–420 (LLIIPFVPATNLFFYVGFVIA). Residues 421–422 (ER) are Extracellular-facing. Residues 423–443 (VLYIPSMGFCLLITVGARALY) form a helical membrane-spanning segment. At 444 to 449 (VKVQKR) the chain is on the cytoplasmic side. Residues 450-470 (FLKSLIFYATATLIVFYGLKT) traverse the membrane as a helical segment. The Extracellular portion of the chain corresponds to 471 to 836 (AIRNGDWQNE…EKQGLKTSKT (366 aa)). 9 TPR repeats span residues 493–526 (AKAWGNLGNVLKSQSKISEAESAYRNALYYRSNM), 527–560 (ADMLYNLGLLLQENSRFAEALHYYKLAIGSRPTL), 561–594 (ASAYLNTGIILMNQGRTEEARRTFLKCSEIPDEN), 606–639 (TSCLYNLGKLYHEQGHYEEALSVYKEAIQKMPRQ), 643–676 (QSLYNMMGEAYMRLSKLPEAEHWYMESLRSKTDH), 677–710 (IPAHLTYGKLLALTGRKSEAEKLFLKAIELDPTK), 711–744 (GNCYMHYGQFLLEEARLIEAAEMAKKAAELDSTE), 745–778 (FDVVFNAAHMLRQASLNEAAEKYYDLAARLRPNY), and 779–812 (PAALMNLGAILHLNGRLQKAEANYLRALQLKPDD).

Belongs to the TMTC family.

It localises to the membrane. It is found in the endoplasmic reticulum. It carries out the reaction a di-trans,poly-cis-dolichyl beta-D-mannosyl phosphate + L-seryl-[protein] = 3-O-(alpha-D-mannosyl)-L-seryl-[protein] + a di-trans,poly-cis-dolichyl phosphate + H(+). The catalysed reaction is a di-trans,poly-cis-dolichyl beta-D-mannosyl phosphate + L-threonyl-[protein] = 3-O-(alpha-D-mannosyl)-L-threonyl-[protein] + a di-trans,poly-cis-dolichyl phosphate + H(+). Its pathway is protein modification; protein glycosylation. Its function is as follows. Transfers mannosyl residues to the hydroxyl group of serine or threonine residues. The 4 members of the TMTC family are O-mannosyl-transferases dedicated primarily to the cadherin superfamily, each member seems to have a distinct role in decorating the cadherin domains with O-linked mannose glycans at specific regions. Also acts as O-mannosyl-transferase on other proteins such as PDIA3. This is Protein O-mannosyl-transferase TMTC2 from Homo sapiens (Human).